Consider the following 276-residue polypeptide: Large ribosomal subunit protein uL2 (276 aa).

The tract at residues 218-255 is disordered; sequence PTVRGSAMNPCDHPHGGGEGRTPIGMSSPVTPWGKPAL.

It belongs to the universal ribosomal protein uL2 family. As to quaternary structure, part of the 50S ribosomal subunit. Forms a bridge to the 30S subunit in the 70S ribosome.

Its function is as follows. One of the primary rRNA binding proteins. Required for association of the 30S and 50S subunits to form the 70S ribosome, for tRNA binding and peptide bond formation. It has been suggested to have peptidyltransferase activity; this is somewhat controversial. Makes several contacts with the 16S rRNA in the 70S ribosome. The sequence is that of Large ribosomal subunit protein uL2 from Clostridium tetani (strain Massachusetts / E88).